A 1080-amino-acid polypeptide reads, in one-letter code: Carbamoyl phosphate synthase large chain (1080 aa).

The segment at 1–403 (MPKRTDLRTI…SLQKAVRGLE (403 aa)) is carboxyphosphate synthetic domain. ATP-binding residues include R129, R169, G175, G176, E208, V210, E215, G241, V242, H243, Q285, and E299. The region spanning 133–328 (RVAMQEIGLE…IAKIAAKLAV (196 aa)) is the ATP-grasp 1 domain. The Mg(2+) site is built by Q285, E299, and N301. Q285, E299, and N301 together coordinate Mn(2+). The segment at 404–554 (TGKVGLEPTG…YSTYEEECEA (151 aa)) is oligomerization domain. Residues 555–942 (APSDRRKIMI…AFARAQEAGD (388 aa)) are carbamoyl phosphate synthetic domain. In terms of domain architecture, ATP-grasp 2 spans 679–876 (QKLVQQLGLR…LAKIAARCMT (198 aa)). Residues R715, R754, L756, E761, G787, V788, H789, S790, Q830, and E847 each contribute to the ATP site. Mg(2+) contacts are provided by Q830, E847, and N849. Mn(2+) is bound by residues Q830, E847, and N849. Residues 943–1080 (IRAPQPGRAF…LQELHKELQV (138 aa)) enclose the MGS-like domain. Positions 943–1080 (IRAPQPGRAF…LQELHKELQV (138 aa)) are allosteric domain.

This sequence belongs to the CarB family. Composed of two chains; the small (or glutamine) chain promotes the hydrolysis of glutamine to ammonia, which is used by the large (or ammonia) chain to synthesize carbamoyl phosphate. Tetramer of heterodimers (alpha,beta)4. Requires Mg(2+) as cofactor. The cofactor is Mn(2+).

It carries out the reaction hydrogencarbonate + L-glutamine + 2 ATP + H2O = carbamoyl phosphate + L-glutamate + 2 ADP + phosphate + 2 H(+). It catalyses the reaction hydrogencarbonate + NH4(+) + 2 ATP = carbamoyl phosphate + 2 ADP + phosphate + 2 H(+). The protein operates within amino-acid biosynthesis; L-arginine biosynthesis; carbamoyl phosphate from bicarbonate: step 1/1. It participates in pyrimidine metabolism; UMP biosynthesis via de novo pathway; (S)-dihydroorotate from bicarbonate: step 1/3. Its function is as follows. Large subunit of the glutamine-dependent carbamoyl phosphate synthetase (CPSase). CPSase catalyzes the formation of carbamoyl phosphate from the ammonia moiety of glutamine, carbonate, and phosphate donated by ATP, constituting the first step of 2 biosynthetic pathways, one leading to arginine and/or urea and the other to pyrimidine nucleotides. The large subunit (synthetase) binds the substrates ammonia (free or transferred from glutamine from the small subunit), hydrogencarbonate and ATP and carries out an ATP-coupled ligase reaction, activating hydrogencarbonate by forming carboxy phosphate which reacts with ammonia to form carbamoyl phosphate. This is Carbamoyl phosphate synthase large chain from Xylella fastidiosa (strain 9a5c).